We begin with the raw amino-acid sequence, 201 residues long: Recombination protein RecR (201 aa).

A C4-type zinc finger spans residues 60 to 75; sequence CSCCGNVDTIDPCTVC. A Toprim domain is found at 83-178; sequence AVIIVVEDVA…RITRLAHGVP (96 aa).

The protein belongs to the RecR family.

Its function is as follows. May play a role in DNA repair. It seems to be involved in an RecBC-independent recombinational process of DNA repair. It may act with RecF and RecO. This chain is Recombination protein RecR, found in Sinorhizobium medicae (strain WSM419) (Ensifer medicae).